A 316-amino-acid polypeptide reads, in one-letter code: MFQHITVLLEEAVDGLAIKPGGIYVDCTLGGAGHSERIVSQLSGGGRLIAFDQDDAALDNARVRLAPYMDRVTLVKSNFRYLEEMLLTCDVPTVDGVPQVDGILFDLGVSSPQLDEAERGFSYNHDAPLDMRMDQGGALTAYDIVNSWEEREISRILHVYGEEKFARSIARKIVQARENAPIETTGELAELVKTGIPAAARRTGGHPAKRSFQALRIAVNDELGAEEDALEEAVKCIRPGGRISVITFHSLEDRICKQLFASYVEKCTCPPDFPKCVCGGTGKLRLVNRKPIVPTEQELEVNPRSRSAKLRVAEKL.

S-adenosyl-L-methionine-binding positions include 32–34, Asp52, Phe79, Asp106, and Gln113; that span reads AGH.

This sequence belongs to the methyltransferase superfamily. RsmH family.

The protein localises to the cytoplasm. It carries out the reaction cytidine(1402) in 16S rRNA + S-adenosyl-L-methionine = N(4)-methylcytidine(1402) in 16S rRNA + S-adenosyl-L-homocysteine + H(+). Functionally, specifically methylates the N4 position of cytidine in position 1402 (C1402) of 16S rRNA. The sequence is that of Ribosomal RNA small subunit methyltransferase H from Paenibacillus sp. (strain JDR-2).